A 203-amino-acid polypeptide reads, in one-letter code: Large ribosomal subunit protein uL13 (203 aa).

An N-acetylalanine modification is found at alanine 2. Residue arginine 59 is modified to Citrulline. At serine 77 the chain carries Phosphoserine; by ZIPK/DAPK3. Arginine 140 is modified (citrulline). An N6-acetyllysine modification is found at lysine 191.

This sequence belongs to the universal ribosomal protein uL13 family. Component of the 60S ribosome. Component of the GAIT complex. Interacts with EIF4G1. Post-translationally, phosphorylation at Ser-77 upon interferon-gamma treatment in monocytes involves a DAPK1-DAPK3 kinase cascade and is causing release from the ribosome, association with the GAIT complex and subsequent involvement in transcript-selective translation inhibition. In terms of processing, citrullinated by PADI4.

It is found in the cytoplasm. In terms of biological role, associated with ribosomes but is not required for canonical ribosome function and has extra-ribosomal functions. Component of the GAIT (gamma interferon-activated inhibitor of translation) complex which mediates interferon-gamma-induced transcript-selective translation inhibition in inflammation processes. Upon interferon-gamma activation and subsequent phosphorylation dissociates from the ribosome and assembles into the GAIT complex which binds to stem loop-containing GAIT elements in the 3'-UTR of diverse inflammatory mRNAs (such as ceruplasmin) and suppresses their translation. In the GAIT complex interacts with m7G cap-bound eIF4G at or near the eIF3-binding site and blocks the recruitment of the 43S ribosomal complex. Involved in methylation of rRNA. This Homo sapiens (Human) protein is Large ribosomal subunit protein uL13 (RPL13A).